A 256-amino-acid chain; its full sequence is D-aminoacyl-tRNA deacylase (256 aa).

It belongs to the DtdA deacylase family. Monomer. The cofactor is Zn(2+).

The enzyme catalyses a D-aminoacyl-tRNA + H2O = a tRNA + a D-alpha-amino acid + H(+). The catalysed reaction is glycyl-tRNA(Ala) + H2O = tRNA(Ala) + glycine + H(+). Functionally, D-aminoacyl-tRNA deacylase with broad substrate specificity. By recycling D-aminoacyl-tRNA to D-amino acids and free tRNA molecules, this enzyme counteracts the toxicity associated with the formation of D-aminoacyl-tRNA entities in vivo. This is D-aminoacyl-tRNA deacylase from Thermoplasma acidophilum (strain ATCC 25905 / DSM 1728 / JCM 9062 / NBRC 15155 / AMRC-C165).